The following is a 386-amino-acid chain: Succinate--CoA ligase [ADP-forming] subunit beta (386 aa).

The ATP-grasp domain occupies lysine 9–glutamate 244. ATP is bound by residues lysine 46, glycine 53 to glycine 55, glutamate 99, cysteine 102, and glutamate 107. Mg(2+) is bound by residues asparagine 199 and aspartate 213. Residues asparagine 264 and glycine 321 to methionine 323 contribute to the substrate site.

This sequence belongs to the succinate/malate CoA ligase beta subunit family. Heterotetramer of two alpha and two beta subunits. Requires Mg(2+) as cofactor.

It catalyses the reaction succinate + ATP + CoA = succinyl-CoA + ADP + phosphate. It carries out the reaction GTP + succinate + CoA = succinyl-CoA + GDP + phosphate. Its pathway is carbohydrate metabolism; tricarboxylic acid cycle; succinate from succinyl-CoA (ligase route): step 1/1. Its function is as follows. Succinyl-CoA synthetase functions in the citric acid cycle (TCA), coupling the hydrolysis of succinyl-CoA to the synthesis of either ATP or GTP and thus represents the only step of substrate-level phosphorylation in the TCA. The beta subunit provides nucleotide specificity of the enzyme and binds the substrate succinate, while the binding sites for coenzyme A and phosphate are found in the alpha subunit. The chain is Succinate--CoA ligase [ADP-forming] subunit beta from Bacillus mycoides (strain KBAB4) (Bacillus weihenstephanensis).